The following is a 138-amino-acid chain: Large ribosomal subunit protein bL17 (138 aa).

This sequence belongs to the bacterial ribosomal protein bL17 family. Part of the 50S ribosomal subunit. Contacts protein L32.

The chain is Large ribosomal subunit protein bL17 from Solidesulfovibrio magneticus (strain ATCC 700980 / DSM 13731 / RS-1) (Desulfovibrio magneticus).